A 403-amino-acid chain; its full sequence is Malate dehydrogenase, chloroplastic (403 aa).

The transit peptide at 1–80 (MATATSASLF…DKKPYGFKIN (80 aa)) directs the protein to the chloroplast. Residues 89-95 (GAAGGIG) and D115 contribute to the NAD(+) site. The substrate site is built by R162 and R168. Residues N175 and 198-200 (ISN) each bind NAD(+). N200 and R234 together coordinate substrate. H258 serves as the catalytic Proton acceptor. M309 is a binding site for NAD(+).

It belongs to the LDH/MDH superfamily. MDH type 1 family. In terms of assembly, homodimer. In terms of tissue distribution, expressed in rosette leaves. Expressed in meristematic regions of roots and shoots, cotyledons, young leaves, trichomes, stamen, pollen, tapetum, gynoecium and ovules.

Its subcellular location is the plastid. It is found in the chloroplast stroma. It catalyses the reaction (S)-malate + NAD(+) = oxaloacetate + NADH + H(+). In terms of biological role, catalyzes a reversible NAD-dependent dehydrogenase reaction involved in central metabolism and redox homeostasis between organelle compartments. Plays a key role in the metabolism of dark chloroplasts and non-green plastids. Essential for embryo viability. Plays an essential role in heterotrophic metabolism in embryos, and autotrophic metabolism in photosynthetic tissues as well. In Arabidopsis thaliana (Mouse-ear cress), this protein is Malate dehydrogenase, chloroplastic.